The chain runs to 541 residues: Calcium/calmodulin-dependent protein kinase kinase (541 aa).

The segment at 83-106 (AVQEDDEAGPHSSNNLAATMSPNL) is disordered. Positions 93–106 (HSSNNLAATMSPNL) are enriched in polar residues. The Protein kinase domain maps to 130 to 411 (YRLMEEIGQG…LHEVKVHTWV (282 aa)). ATP is bound by residues 136–144 (IGQGSYGIV) and Lys-159. An RP domain region spans residues 169-190 (NFACFRQPPPRRNKENAAPSVL). The active-site Proton acceptor is the Asp-276. Residues 437–442 (ENCVRV) form an autoinhibitory domain region. Residues 440-465 (VRVIPRLDTLILVKAMGHRKRFGNPF) form a calmodulin-binding region. The disordered stretch occupies residues 462 to 512 (GNPFRNKLSAQSSIRDRRKSSSVKDPTYVPPPNSPPATSNNNLNSTKVDRP). The span at 497-507 (PATSNNNLNST) shows a compositional bias: low complexity.

Belongs to the protein kinase superfamily. Ser/Thr protein kinase family. The cofactor is Mg(2+). Expressed in head and tail neurons and vulval muscles.

It is found in the cytoplasm. It carries out the reaction L-seryl-[protein] + ATP = O-phospho-L-seryl-[protein] + ADP + H(+). The enzyme catalyses L-threonyl-[protein] + ATP = O-phospho-L-threonyl-[protein] + ADP + H(+). With respect to regulation, activated by Ca(2+)/calmodulin. Binding of calmodulin may relieve intrasteric autoinhibition. Calcium/calmodulin-dependent protein kinase which phosphorylates cmk-1. Component of a calcium-triggered signaling cascade involved in CRE-mediated transcriptional activation, probably through cmk-1-mediated crh-1/CREB phosphorylation. Plays a role in salt-avoidance learning behavior via the phosphorylation of cmk-1. The chain is Calcium/calmodulin-dependent protein kinase kinase from Caenorhabditis elegans.